Reading from the N-terminus, the 260-residue chain is MVKFYDREFGSRLLIGSALYPSPAIMQDSIRESGAEIVTVSLRRETAGGKAGDQFWSLIRELGVTVLPNTAGCRGVRDAVTTAKLARELFATSWIKLEVIADNDTLQPDVVGLVEAAQILIKDGFEVFPYCTEDLSVAMRLVDAGCRVVMPWAAPIGSARGITNRDALKLLRDRLPDITLVVDAGLGAPSHAAEAMELGYDAVLLNTAIAKAEDPVAMARGFKLAIEAGRTGFEAGLMGARDFASPSTPVIGTPFWHAVS.

Residue Lys96 is the Schiff-base intermediate with DXP of the active site. 1-deoxy-D-xylulose 5-phosphate-binding positions include Gly157, 184–185 (AG), and 206–207 (NT).

This sequence belongs to the ThiG family. In terms of assembly, homotetramer. Forms heterodimers with either ThiH or ThiS.

The protein localises to the cytoplasm. The enzyme catalyses [ThiS sulfur-carrier protein]-C-terminal-Gly-aminoethanethioate + 2-iminoacetate + 1-deoxy-D-xylulose 5-phosphate = [ThiS sulfur-carrier protein]-C-terminal Gly-Gly + 2-[(2R,5Z)-2-carboxy-4-methylthiazol-5(2H)-ylidene]ethyl phosphate + 2 H2O + H(+). The protein operates within cofactor biosynthesis; thiamine diphosphate biosynthesis. Functionally, catalyzes the rearrangement of 1-deoxy-D-xylulose 5-phosphate (DXP) to produce the thiazole phosphate moiety of thiamine. Sulfur is provided by the thiocarboxylate moiety of the carrier protein ThiS. In vitro, sulfur can be provided by H(2)S. This Rhodopseudomonas palustris (strain ATCC BAA-98 / CGA009) protein is Thiazole synthase.